We begin with the raw amino-acid sequence, 342 residues long: Alpha-(1,3)-fucosyltransferase 7 (342 aa).

Residues Met1 to Gly14 lie on the Cytoplasmic side of the membrane. The helical; Signal-anchor for type II membrane protein transmembrane segment at Leu15 to Ala36 threads the bilayer. Topologically, residues Pro37–Ala342 are lumenal. Cys68 and Cys76 are disulfide-bonded. Asn81 carries an N-linked (GlcNAc...) asparagine glycan. A disulfide bridge links Cys211 with Cys214. N-linked (GlcNAc...) asparagine glycosylation occurs at Asn291. A disulfide bridge connects residues Cys318 and Cys321.

Belongs to the glycosyltransferase 10 family. N-glycosylated. Leukocytic/myeloid lineage cells.

Its subcellular location is the golgi apparatus. It localises to the golgi stack membrane. It carries out the reaction an N-acetyl-alpha-neuraminyl-(2-&gt;3)-beta-D-galactosyl-(1-&gt;4)-N-acetyl-beta-D-glucosaminyl derivative + GDP-beta-L-fucose = an alpha-Neu5Ac-(2-&gt;3)-beta-D-Gal-(1-&gt;4)-[alpha-L-Fuc-(1-&gt;3)]-beta-D-GlcNAc derivative + GDP + H(+). The catalysed reaction is a neolactoside IV(3)-alpha-NeuAc-nLc4Cer + GDP-beta-L-fucose = a neolactoside IV(3)-alpha-NeuNAc,III(3)-alpha-Fuc-nLc4Cer + GDP + H(+). The enzyme catalyses a neolactoside VI(3)-alpha-NeuNAc-nLc6Cer + GDP-beta-L-fucose = a neolactoside VI(3)-alpha-NeuAc,V(3)-alphaFuc-nLc6Cer + GDP + H(+). It catalyses the reaction an alpha-Neu5Ac-(2-&gt;3)-beta-D-Gal-(1-&gt;4)-beta-D-GlcNAc-(1-&gt;3)-beta-D-Gal-(1-&gt;4)-[alpha-L-Fuc-(1-&gt;3)]-beta-D-GlcNAc derivative + GDP-beta-L-fucose = an alpha-Neu5Ac-(2-&gt;3)-beta-D-Gal-(1-&gt;4)-[alpha-L-Fuc-(1-&gt;3)]-beta-D-GlcNAc-(1-&gt;3)-beta-D-Gal-(1-&gt;4)-[alpha-L-Fuc-(1-&gt;3)]-beta-D-GlcNAc derivative + GDP + H(+). It carries out the reaction an alpha-Neu5Ac-(2-&gt;3)-beta-D-Gal-(1-&gt;4)-beta-D-GlcNAc6S derivative + GDP-beta-L-fucose = an alpha-Neu5Ac-(2-&gt;3)-beta-D-Gal-(1-&gt;4)-[alpha-L-Fuc-(1-&gt;3)]-beta-D-GlcNAc6S derivative + GDP + H(+). The catalysed reaction is alpha-Neu5Ac-(2-&gt;3)-beta-D-Gal-(1-&gt;4)-beta-D-GlcNAc-(1-&gt;3)-beta-D-Gal-(1-&gt;4)-D-Glc + GDP-beta-L-fucose = alpha-Neu5Ac-(2-&gt;3)-beta-D-Gal-(1-&gt;4)-[alpha-L-Fuc-(1-&gt;3)]-beta-D-GlcNAc-(1-&gt;3)-beta-D-Gal-(1-&gt;4)-D-Glc + GDP + H(+). The enzyme catalyses alpha-Neu5Ac-(2-&gt;3)-beta-D-Gal-(1-&gt;4)-beta-D-GlcNAc-(1-&gt;3)-beta-D-Gal-(1-&gt;4)-[alpha-L-Fuc-(1-&gt;3)]-beta-D-GlcNAc-(1-&gt;3)-beta-D-Gal-(1-&gt;4)-beta-D-GlcNAc + GDP-beta-L-fucose = alpha-Neu5Ac-(2-&gt;3)-beta-D-Gal-(1-&gt;4)-[alpha-L-Fuc-(1-&gt;3)]-beta-D-GlcNAc-(1-&gt;3)-beta-D-Gal-(1-&gt;4)-[alpha-L-Fuc-(1-&gt;3)]-beta-D-GlcNAc-(1-&gt;3)-beta-D-Gal-(1-&gt;4)-beta-D-GlcNAc + GDP + H(+). It catalyses the reaction alpha-Neu5Ac-(2-&gt;3)-beta-D-Gal-(1-&gt;4)-beta-D-GlcNAc-(1-&gt;3)-beta-D-Gal-(1-&gt;4)-beta-D-GlcNAc-(1-&gt;3)-beta-D-Gal-(1-&gt;4)-beta-D-GlcNAc + GDP-beta-L-fucose = alpha-Neu5Ac-(2-&gt;3)-beta-D-Gal-(1-&gt;4)-[alpha-L-Fuc-(1-&gt;3)]-beta-D-GlcNAc-(1-&gt;3)-beta-D-Gal-(1-&gt;4)-beta-D-GlcNAc-(1-&gt;3)-beta-D-Gal-(1-&gt;4)-beta-D-GlcNAc + GDP + H(+). It participates in protein modification; protein glycosylation. With respect to regulation, inhibited by NaCl. Inhibited by GDP in a concentration dependent manner, with an IC(50) value of 93 uM. Also inhibited by GMP and GTP. Inhibited by N-ethylmaleimide. Activated by poly(ethylene glycol) by enhancing the thermal stability of FUT7. Activated by Mn2+, Ca2+, and Mg2+. Both panosialin A and B inhibit activity with IC(50) values of 4.8 and 5.3 ug/ml, respectively. Inhibited by gallic acid (GA) and (-)-epigallocatechin gallate (EGCG) in a time-dependent and irreversible manner with IC(50) values of 60 and 700 nM, respectively. Its function is as follows. Catalyzes the transfer of L-fucose, from a guanosine diphosphate-beta-L-fucose, to the N-acetyl glucosamine (GlcNAc) of a distal alpha2,3 sialylated lactosamine unit of a glycoprotein or a glycolipid-linked sialopolylactosamines chain through an alpha-1,3 glycosidic linkage and participates in the final fucosylation step in the biosynthesis of the sialyl Lewis X (sLe(x)), a carbohydrate involved in cell and matrix adhesion during leukocyte trafficking and fertilization. In vitro, also synthesizes sialyl-dimeric-Lex structures, from VIM-2 structures and both di-fucosylated and trifucosylated structures from mono-fucosylated precursors. However does not catalyze alpha 1-3 fucosylation when an internal alpha 1-3 fucosylation is present in polylactosamine chain and the fucosylation rate of the internal GlcNAc residues is reduced once fucose has been added to the distal GlcNAc. Also catalyzes the transfer of a fucose from GDP-beta-fucose to the 6-sulfated a(2,3)sialylated substrate to produce 6-sulfo sLex mediating significant L-selectin-dependent cell adhesion. Through sialyl-Lewis(x) biosynthesis, can control SELE- and SELP-mediated cell adhesion with leukocytes and allows leukocytes tethering and rolling along the endothelial tissue thereby enabling the leukocytes to accumulate at a site of inflammation. May enhance embryo implantation through sialyl Lewis X (sLeX)-mediated adhesion of embryo cells to endometrium. May affect insulin signaling by up-regulating the phosphorylation and expression of some signaling molecules involved in the insulin-signaling pathway through SLe(x) which is present on the glycans of the INSRR alpha subunit. In Homo sapiens (Human), this protein is Alpha-(1,3)-fucosyltransferase 7.